Consider the following 308-residue polypeptide: Methionyl-tRNA formyltransferase (308 aa).

109 to 112 (SLLP) lines the (6S)-5,6,7,8-tetrahydrofolate pocket.

Belongs to the Fmt family.

The catalysed reaction is L-methionyl-tRNA(fMet) + (6R)-10-formyltetrahydrofolate = N-formyl-L-methionyl-tRNA(fMet) + (6S)-5,6,7,8-tetrahydrofolate + H(+). Attaches a formyl group to the free amino group of methionyl-tRNA(fMet). The formyl group appears to play a dual role in the initiator identity of N-formylmethionyl-tRNA by promoting its recognition by IF2 and preventing the misappropriation of this tRNA by the elongation apparatus. The polypeptide is Methionyl-tRNA formyltransferase (Phenylobacterium zucineum (strain HLK1)).